Here is a 123-residue protein sequence, read N- to C-terminus: uncharacterized protein (123 aa).

Residues 34–53 form a helical membrane-spanning segment; it reads LPFFFLFLGNLGKFFFLWPL.

The protein resides in the membrane. This is an uncharacterized protein from Saccharomyces cerevisiae (strain ATCC 204508 / S288c) (Baker's yeast).